The chain runs to 338 residues: tRNA-specific 2-thiouridylase MnmA (338 aa).

ATP-binding positions include 6 to 13 (ALSGGVDS) and M32. Catalysis depends on C92, which acts as the Nucleophile. Residues C92 and C186 are joined by a disulfide bond. G116 contacts ATP. An interaction with tRNA region spans residues 134 to 136 (KDQ). C186 acts as the Cysteine persulfide intermediate in catalysis. The tract at residues 288-289 (RY) is interaction with tRNA.

It belongs to the MnmA/TRMU family.

The protein localises to the cytoplasm. It carries out the reaction S-sulfanyl-L-cysteinyl-[protein] + uridine(34) in tRNA + AH2 + ATP = 2-thiouridine(34) in tRNA + L-cysteinyl-[protein] + A + AMP + diphosphate + H(+). Functionally, catalyzes the 2-thiolation of uridine at the wobble position (U34) of tRNA, leading to the formation of s(2)U34. The polypeptide is tRNA-specific 2-thiouridylase MnmA (Campylobacter fetus subsp. fetus (strain 82-40)).